The following is a 427-amino-acid chain: 3-phosphoshikimate 1-carboxyvinyltransferase (427 aa).

3 residues coordinate 3-phosphoshikimate: Lys20, Ser21, and Arg25. Residue Lys20 participates in phosphoenolpyruvate binding. Phosphoenolpyruvate is bound by residues Gly92 and Arg120. 3-phosphoshikimate contacts are provided by Ser166, Gln168, Asp312, and Lys339. Phosphoenolpyruvate is bound at residue Gln168. Asp312 functions as the Proton acceptor in the catalytic mechanism. The phosphoenolpyruvate site is built by Arg343 and Arg385.

The protein belongs to the EPSP synthase family. Monomer.

Its subcellular location is the cytoplasm. It catalyses the reaction 3-phosphoshikimate + phosphoenolpyruvate = 5-O-(1-carboxyvinyl)-3-phosphoshikimate + phosphate. The protein operates within metabolic intermediate biosynthesis; chorismate biosynthesis; chorismate from D-erythrose 4-phosphate and phosphoenolpyruvate: step 6/7. Its function is as follows. Catalyzes the transfer of the enolpyruvyl moiety of phosphoenolpyruvate (PEP) to the 5-hydroxyl of shikimate-3-phosphate (S3P) to produce enolpyruvyl shikimate-3-phosphate and inorganic phosphate. The chain is 3-phosphoshikimate 1-carboxyvinyltransferase from Streptococcus thermophilus (strain ATCC BAA-250 / LMG 18311).